A 379-amino-acid polypeptide reads, in one-letter code: Gonadotropin-releasing hormone II receptor (379 aa).

Topologically, residues 1-40 (MSAGNGTPWGSAVGEEAWAGSGVAVEGSELPTFSTAAKVR) are extracellular. Residues 41 to 60 (VGVTIVLFVSSAGGNLAVLW) form a helical membrane-spanning segment. Residues 61–76 (SVTRPQPSQLRPSPVR) are Cytoplasmic-facing. The helical transmembrane segment at 77–96 (TLFAHLAAADLLVTFVVMPL) threads the bilayer. Over 97–114 (DATWNITVQWLAGDIACR) the chain is Extracellular. Asn101 is a glycosylation site (N-linked (GlcNAc...) asparagine). An intrachain disulfide couples Cys113 to Cys188. Residues 115–136 (TLMFLKLMAMYSAAFLPVVIGL) traverse the membrane as a helical segment. At 137–160 (DRQAAVLNPLGSRSGVRKLLGAAW) the chain is on the cytoplasmic side. The helical transmembrane segment at 161–178 (GLSFLLALPQLFLFHTVH) threads the bilayer. The Extracellular segment spans residues 179-204 (RAGPVPFTQCVTKGSFKARWQETTYN). A helical membrane pass occupies residues 205–224 (LFTFCCLFLLPLIAMAICYS). Over 225-278 (RIVLSVSSPQTRKGSHAPAGEFALRRSFDNRPRVCLRALRLALLILLTFILCWT) the chain is Cytoplasmic. A helical membrane pass occupies residues 279 to 297 (PYYLLGLWYWFSPTMLTEV). Over 298–303 (PPSLSH) the chain is Extracellular. A helical transmembrane segment spans residues 304–323 (ILFLFGLLNAPLDPLLYGAF). The Cytoplasmic portion of the chain corresponds to 324–379 (TFGCRRGHQELSIDSSKEGSGRMLQQEIHALRQQEVQKTVTSRSAGETKGISITSI).

This sequence belongs to the G-protein coupled receptor 1 family. Phosphorylated on the C-terminal cytoplasmic tail.

It is found in the cell membrane. In terms of biological role, receptor for gonadotropin releasing hormone II (GnRH II). This receptor mediates its action by association with G proteins that activate a phosphatidylinositol-calcium second messenger system. This chain is Gonadotropin-releasing hormone II receptor (GNRHR2), found in Chlorocebus aethiops (Green monkey).